We begin with the raw amino-acid sequence, 300 residues long: Ribosomal protein L11 methyltransferase (300 aa).

S-adenosyl-L-methionine is bound by residues T148, G171, D193, and N235.

It belongs to the methyltransferase superfamily. PrmA family.

Its subcellular location is the cytoplasm. It catalyses the reaction L-lysyl-[protein] + 3 S-adenosyl-L-methionine = N(6),N(6),N(6)-trimethyl-L-lysyl-[protein] + 3 S-adenosyl-L-homocysteine + 3 H(+). Methylates ribosomal protein L11. This Desulfotalea psychrophila (strain LSv54 / DSM 12343) protein is Ribosomal protein L11 methyltransferase.